Consider the following 865-residue polypeptide: Outer membrane usher protein HtrE (865 aa).

The signal sequence occupies residues M1–S29. The cysteines at positions 838 and 862 are disulfide-linked.

It belongs to the fimbrial export usher family.

Its subcellular location is the cell outer membrane. In terms of biological role, part of the yadCKLM-htrE-yadVN fimbrial operon. Could contribute to adhesion to various surfaces in specific environmental niches. Probably involved in the export and assembly of fimbrial subunits across the outer membrane. This chain is Outer membrane usher protein HtrE (htrE), found in Escherichia coli (strain K12).